The primary structure comprises 140 residues: Methylglyoxal synthase (140 aa).

An MGS-like domain is found at 1 to 140 (MNIALIAHDE…KERQEKEGTP (140 aa)). Substrate-binding positions include His-8, Lys-12, 34-37 (TGTT), and 54-55 (SG). The Proton donor/acceptor role is filled by Asp-60. His-87 contributes to the substrate binding site.

It belongs to the methylglyoxal synthase family.

The enzyme catalyses dihydroxyacetone phosphate = methylglyoxal + phosphate. Its function is as follows. Catalyzes the formation of methylglyoxal from dihydroxyacetone phosphate. This is Methylglyoxal synthase from Oceanobacillus iheyensis (strain DSM 14371 / CIP 107618 / JCM 11309 / KCTC 3954 / HTE831).